Here is a 507-residue protein sequence, read N- to C-terminus: ATP synthase subunit alpha, chloroplastic (507 aa).

Residue G170 to T177 coordinates ATP.

This sequence belongs to the ATPase alpha/beta chains family. F-type ATPases have 2 components, CF(1) - the catalytic core - and CF(0) - the membrane proton channel. CF(1) has five subunits: alpha(3), beta(3), gamma(1), delta(1), epsilon(1). CF(0) has four main subunits: a, b, b' and c.

Its subcellular location is the plastid. It is found in the chloroplast thylakoid membrane. It catalyses the reaction ATP + H2O + 4 H(+)(in) = ADP + phosphate + 5 H(+)(out). In terms of biological role, produces ATP from ADP in the presence of a proton gradient across the membrane. The alpha chain is a regulatory subunit. This is ATP synthase subunit alpha, chloroplastic from Tetradesmus obliquus (Green alga).